Consider the following 81-residue polypeptide: uncharacterized protein (81 aa).

The protein to M.thermoautotrophicum MTH886.

This is an uncharacterized protein from Methanocaldococcus jannaschii (strain ATCC 43067 / DSM 2661 / JAL-1 / JCM 10045 / NBRC 100440) (Methanococcus jannaschii).